Reading from the N-terminus, the 223-residue chain is 7-cyano-7-deazaguanine synthase (223 aa).

12–22 (FSGGQDSTTCL) contributes to the ATP binding site. The Zn(2+) site is built by Cys189, Cys198, Cys201, and Cys204.

Belongs to the QueC family. Homodimer. It depends on Zn(2+) as a cofactor.

The enzyme catalyses 7-carboxy-7-deazaguanine + NH4(+) + ATP = 7-cyano-7-deazaguanine + ADP + phosphate + H2O + H(+). It functions in the pathway purine metabolism; 7-cyano-7-deazaguanine biosynthesis. Catalyzes the ATP-dependent conversion of 7-carboxy-7-deazaguanine (CDG) to 7-cyano-7-deazaguanine (preQ(0)). The polypeptide is 7-cyano-7-deazaguanine synthase (Halalkalibacterium halodurans (strain ATCC BAA-125 / DSM 18197 / FERM 7344 / JCM 9153 / C-125) (Bacillus halodurans)).